The primary structure comprises 283 residues: UPF0276 protein Anae109_1558 (283 aa).

The protein belongs to the UPF0276 family.

This chain is UPF0276 protein Anae109_1558, found in Anaeromyxobacter sp. (strain Fw109-5).